We begin with the raw amino-acid sequence, 388 residues long: Chorismate synthase (388 aa).

2 residues coordinate NADP(+): Arg39 and Arg45. FMN-binding positions include 130-132 (RSS), 251-252 (NA), Ala296, 311-315 (KPIPT), and Arg337.

The protein belongs to the chorismate synthase family. In terms of assembly, homotetramer. It depends on FMNH2 as a cofactor.

The enzyme catalyses 5-O-(1-carboxyvinyl)-3-phosphoshikimate = chorismate + phosphate. Its pathway is metabolic intermediate biosynthesis; chorismate biosynthesis; chorismate from D-erythrose 4-phosphate and phosphoenolpyruvate: step 7/7. Functionally, catalyzes the anti-1,4-elimination of the C-3 phosphate and the C-6 proR hydrogen from 5-enolpyruvylshikimate-3-phosphate (EPSP) to yield chorismate, which is the branch point compound that serves as the starting substrate for the three terminal pathways of aromatic amino acid biosynthesis. This reaction introduces a second double bond into the aromatic ring system. The polypeptide is Chorismate synthase (Streptococcus equi subsp. equi (strain 4047)).